Reading from the N-terminus, the 717-residue chain is Polyribonucleotide nucleotidyltransferase (717 aa).

Mg(2+) contacts are provided by Asp495 and Asp501. A KH domain is found at Pro562–Ile624. One can recognise an S1 motif domain in the interval Gly634–Lys703.

It belongs to the polyribonucleotide nucleotidyltransferase family. Requires Mg(2+) as cofactor.

It localises to the cytoplasm. The enzyme catalyses RNA(n+1) + phosphate = RNA(n) + a ribonucleoside 5'-diphosphate. In terms of biological role, involved in mRNA degradation. Catalyzes the phosphorolysis of single-stranded polyribonucleotides processively in the 3'- to 5'-direction. The protein is Polyribonucleotide nucleotidyltransferase of Cytophaga hutchinsonii (strain ATCC 33406 / DSM 1761 / CIP 103989 / NBRC 15051 / NCIMB 9469 / D465).